The following is an 86-amino-acid chain: Small ribosomal subunit protein bS20 (86 aa).

Belongs to the bacterial ribosomal protein bS20 family.

In terms of biological role, binds directly to 16S ribosomal RNA. The polypeptide is Small ribosomal subunit protein bS20 (Sulfurimonas denitrificans (strain ATCC 33889 / DSM 1251) (Thiomicrospira denitrificans (strain ATCC 33889 / DSM 1251))).